The primary structure comprises 4555 residues: Protocadherin Fat 3 (4555 aa).

The first 31 residues, 1–31 (MSVTMGHCMGTKPPSCIILLLLKLFATVSQG), serve as a signal peptide directing secretion. At 32-4153 (LPGTGPLGFH…AGHSYVGKEE (4122 aa)) the chain is on the extracellular side. Cadherin domains are found at residues 43–157 (THST…RPLF), 158–262 (SPTT…NEHA), 263–374 (PIIH…TPVR), 376–471 (EKDV…TPEF), 472–577 (QEAL…SPLF), 578–680 (EKVA…SKSF), 726–830 (KSFP…NPVF), 831–935 (LQDS…SPAF), 936–1042 (IPSS…TPYF), 1043–1147 (PDFA…APLT), 1148–1253 (SEPI…RPQF), 1254–1358 (PEKV…SPIP), 1362–1459 (DEPF…GPEF), 1460–1565 (SQPH…SPYF), 1566–1768 (TNPL…PPVF), 1769–1882 (LFSQ…PPVF), 1883–1985 (TQAV…TQSF), 1982–2083 (TQSF…SPVF), 2084–2185 (VGLP…MPVF), 2186–2286 (DKPF…PPVF), 2287–2393 (DQPT…PPVF), 2394–2495 (NQLI…SPAF), 2496–2599 (SQST…APQF), 2600–2707 (MTVE…LPSF), 2708–2813 (TQSQ…KPVF), 2814–2923 (ETST…APVF), 2924–3028 (AHEV…SPVC), 3029–3130 (DQVA…PPVF), 3131–3235 (SSNH…PPVF), 3236–3340 (ERRD…PPRF), 3341–3445 (SQDV…SPVF), 3446–3550 (TPAN…KPTA), and 3551–3660 (IPLE…PEDF). The N-linked (GlcNAc...) asparagine glycan is linked to Asn-48. N-linked (GlcNAc...) asparagine glycosylation is present at Asn-341. 7 N-linked (GlcNAc...) asparagine glycosylation sites follow: Asn-481, Asn-562, Asn-667, Asn-799, Asn-879, Asn-898, and Asn-1006. Residues Asn-1367 and Asn-1429 are each glycosylated (N-linked (GlcNAc...) asparagine). Residue Asn-1751 is glycosylated (N-linked (GlcNAc...) asparagine). Residues Asn-1944, Asn-1993, and Asn-1996 are each glycosylated (N-linked (GlcNAc...) asparagine). Residues Asn-2208, Asn-2292, Asn-2331, and Asn-2467 are each glycosylated (N-linked (GlcNAc...) asparagine). Residue Asn-2734 is glycosylated (N-linked (GlcNAc...) asparagine). The N-linked (GlcNAc...) asparagine glycan is linked to Asn-3000. A glycan (N-linked (GlcNAc...) asparagine) is linked at Asn-3201. N-linked (GlcNAc...) asparagine glycans are attached at residues Asn-3449, Asn-3618, and Asn-3741. The 39-residue stretch at 3794–3832 (SNDPCVEKPCPEDMQCVGYEASRRPFLCQCPPGKLGECS) folds into the EGF-like 1 domain. 3 disulfide bridges follow: Cys-3798/Cys-3809, Cys-3803/Cys-3821, and Cys-3823/Cys-3831. Residues 3834-4017 (HTSLSFAGNS…VGLTELKLGC (184 aa)) enclose the Laminin G-like domain. Residue Asn-3926 is glycosylated (N-linked (GlcNAc...) asparagine). Intrachain disulfides connect Cys-3984–Cys-4017, Cys-4024–Cys-4035, Cys-4029–Cys-4045, Cys-4047–Cys-4056, Cys-4063–Cys-4074, Cys-4068–Cys-4083, Cys-4085–Cys-4094, Cys-4101–Cys-4112, Cys-4106–Cys-4121, and Cys-4123–Cys-4132. EGF-like domains follow at residues 4020–4057 (YPDA…TNCE) and 4059–4095 (EITA…VTCE). In terms of domain architecture, EGF-like 4; calcium-binding spans 4097–4133 (DVDECEREECENGGSCVNLFGSFFCNCTPGYVGQYCG). The helical transmembrane segment at 4154-4174 (LIGIAVVLFVIFTLIVLFIVF) threads the bilayer. The Cytoplasmic segment spans residues 4175–4555 (RKKVFRKNYS…FVETQQQTQV (381 aa)). 2 disordered regions span residues 4300–4353 (IRKN…YHWD) and 4395–4474 (GGYD…LGGP). Polar residues predominate over residues 4322 to 4343 (CFTNSNKGSNSEVQSLSSFQSD). Omega-N-methylarginine occurs at positions 4508 and 4518.

Restricted to the nervous system, mainly in brain. In brain, it is highly expressed in the olfactory bulb and retina. In the developing olfactory bulb, it localizes along the dendrites of these cells as well as in their axons to some extent. In retina, it cocentrates in the inner plexiform layer throughout development (at protein level).

It localises to the membrane. Its function is as follows. May play a role in the interactions between neurites derived from specific subsets of neurons during development. The sequence is that of Protocadherin Fat 3 (Fat3) from Mus musculus (Mouse).